Consider the following 143-residue polypeptide: Fluoride-specific ion channel FluC 1 (143 aa).

The next 4 helical transmembrane spans lie at Val-13 to Ala-33, Gly-42 to Leu-62, Leu-80 to Ala-100, and Trp-111 to Ile-131. Positions 88 and 91 each coordinate Na(+).

The protein belongs to the fluoride channel Fluc/FEX (TC 1.A.43) family.

Its subcellular location is the cell membrane. It carries out the reaction fluoride(in) = fluoride(out). Na(+) is not transported, but it plays an essential structural role and its presence is essential for fluoride channel function. Functionally, fluoride-specific ion channel. Important for reducing fluoride concentration in the cell, thus reducing its toxicity. This is Fluoride-specific ion channel FluC 1 from Cutibacterium acnes (strain DSM 16379 / KPA171202) (Propionibacterium acnes).